Consider the following 297-residue polypeptide: Acetylglutamate kinase (297 aa).

Residues 72 to 73 (GG), Arg-94, and Asn-187 each bind substrate.

The protein belongs to the acetylglutamate kinase family. ArgB subfamily.

It localises to the cytoplasm. It carries out the reaction N-acetyl-L-glutamate + ATP = N-acetyl-L-glutamyl 5-phosphate + ADP. Its pathway is amino-acid biosynthesis; L-arginine biosynthesis; N(2)-acetyl-L-ornithine from L-glutamate: step 2/4. In terms of biological role, catalyzes the ATP-dependent phosphorylation of N-acetyl-L-glutamate. This chain is Acetylglutamate kinase, found in Synechocystis sp. (strain ATCC 27184 / PCC 6803 / Kazusa).